The chain runs to 173 residues: Zinc resistance-associated protein homolog (173 aa).

An N-terminal signal peptide occupies residues 1-28 (MNSKRIALGIIALATVVSLGTAANNAFA).

It belongs to the ZraP family.

This Nitratidesulfovibrio vulgaris (strain ATCC 29579 / DSM 644 / CCUG 34227 / NCIMB 8303 / VKM B-1760 / Hildenborough) (Desulfovibrio vulgaris) protein is Zinc resistance-associated protein homolog.